The following is a 404-amino-acid chain: Odorant receptor 74a (404 aa).

Over 1-38 (MSFHRYRPRLPGGELAPMPWPVSLYRVLNHVAWPLEAE) the chain is Cytoplasmic. A helical transmembrane segment spans residues 39-59 (SGRWTVFLDRLMIFLGFLVFC). The Extracellular segment spans residues 60–67 (EHNEVDFH). The helical transmembrane segment at 68–88 (YLIANRQDMDNMLTGLPTYLI) threads the bilayer. The Cytoplasmic portion of the chain corresponds to 89-141 (LVEMQIRCFQLAWHKDRFRALLQRFYAEIYVSEEMEPHLFASIQRQMLATRVN). Residues 142–162 (STVYLLALLNFFLVPVTNVIY) traverse the membrane as a helical segment. Topologically, residues 163 to 181 (HRREMLYKQVYPFDNTQLH) are extracellular. The helical transmembrane segment at 182–202 (FFIPLLVLNFWVGFIITSMLF) threads the bilayer. Residues 203 to 274 (GELNVMGELM…QRVEKEFTLR (72 aa)) are Cytoplasmic-facing. The chain crosses the membrane as a helical span at residues 275–295 (IFVMFAFSAGLLCALFFKAFT). The Extracellular portion of the chain corresponds to 296 to 303 (NPWGNVAY). The chain crosses the membrane as a helical span at residues 304-324 (IVWFLAKFMELLALGMLGSIL). Over 325–380 (LKTTDELGMMYYTADWEQVIHQSDNVGENVKLMKLVTLAIQLNSRPFFITGLNYFR) the chain is Cytoplasmic. A helical transmembrane segment spans residues 381-401 (VSLTAVLKIIQGAFSYFTFLN). Over 402–404 (SMR) the chain is Extracellular.

It belongs to the insect chemoreceptor superfamily. Heteromeric odorant receptor channel (TC 1.A.69) family. Or1a subfamily. As to quaternary structure, interacts with Orco. Complexes exist early in the endomembrane system in olfactory sensory neurons (OSNs), coupling these complexes to the conserved ciliary trafficking pathway.

It is found in the cell membrane. Its function is as follows. Odorant receptor which mediates acceptance or avoidance behavior, depending on its substrates. The odorant receptor repertoire encodes a large collection of odor stimuli that vary widely in identity, intensity, and duration. May form a complex with Orco to form odorant-sensing units, providing sensitive and prolonged odorant signaling and calcium permeability. Involved in the behavioral responses to octanol, anisole, and 2-heptanone. The protein is Odorant receptor 74a (Or74a) of Drosophila melanogaster (Fruit fly).